The primary structure comprises 138 residues: Acidic phospholipase A2 Cvv-E6f (138 aa).

An N-terminal signal peptide occupies residues 1–16 (MRTLWIVAVLLLGVEG). Cystine bridges form between cysteine 42–cysteine 131, cysteine 44–cysteine 60, cysteine 59–cysteine 111, cysteine 65–cysteine 138, cysteine 66–cysteine 104, cysteine 73–cysteine 97, and cysteine 91–cysteine 102. 3 residues coordinate Ca(2+): tyrosine 43, glycine 45, and glycine 47. The active site involves histidine 63. Aspartate 64 contributes to the Ca(2+) binding site. The active site involves aspartate 105.

Ca(2+) is required as a cofactor. Expressed by the venom gland.

The protein resides in the secreted. The catalysed reaction is a 1,2-diacyl-sn-glycero-3-phosphocholine + H2O = a 1-acyl-sn-glycero-3-phosphocholine + a fatty acid + H(+). In terms of biological role, snake venom phospholipase A2 (PLA2) that shows very low inhibition of ADP-induced platelet aggregation in platelet-rich plasma of human, rabbit and guinea pig. In vivo, shows efficient edema-inducing activities in rat paws. PLA2 catalyzes the calcium-dependent hydrolysis of the 2-acyl groups in 3-sn-phosphoglycerides. The sequence is that of Acidic phospholipase A2 Cvv-E6f from Crotalus viridis viridis (Prairie rattlesnake).